A 116-amino-acid polypeptide reads, in one-letter code: Fluoride-specific ion channel FluC 1 (116 aa).

The next 4 helical transmembrane spans lie at 1 to 21 (MYAP…RYLV), 32 to 52 (FPLG…WLAG), 54 to 74 (GAAD…FTTF), and 93 to 113 (VVVY…LGYH). Positions 69 and 72 each coordinate Na(+).

This sequence belongs to the fluoride channel Fluc/FEX (TC 1.A.43) family.

Its subcellular location is the cell membrane. The catalysed reaction is fluoride(in) = fluoride(out). Its activity is regulated as follows. Na(+) is not transported, but it plays an essential structural role and its presence is essential for fluoride channel function. Its function is as follows. Fluoride-specific ion channel. Important for reducing fluoride concentration in the cell, thus reducing its toxicity. In Geobacillus kaustophilus (strain HTA426), this protein is Fluoride-specific ion channel FluC 1.